Reading from the N-terminus, the 146-residue chain is Hut operon positive regulatory protein (146 aa).

This sequence belongs to the HutP family. In terms of assembly, homohexamer.

Antiterminator that binds to cis-acting regulatory sequences on the mRNA in the presence of histidine, thereby suppressing transcription termination and activating the hut operon for histidine utilization. This is Hut operon positive regulatory protein from Bacillus mycoides (strain KBAB4) (Bacillus weihenstephanensis).